The primary structure comprises 177 residues: O-acetyl-ADP-ribose deacetylase (177 aa).

The 175-residue stretch at 1–175 (MKTRIHVVQG…LYERLLTQQG (175 aa)) folds into the Macro domain. Residues 11–12 (DI), asparagine 25, 33–35 (GVD), and 122–126 (STGVY) contribute to the substrate site. Aspartate 35 functions as the Proton acceptor in the catalytic mechanism.

It belongs to the MacroD-type family. YmdB subfamily. In terms of assembly, homodimer. Interacts with RNase III.

It carries out the reaction 3''-O-acetyl-ADP-D-ribose + H2O = ADP-D-ribose + acetate + H(+). The enzyme catalyses 2''-O-acetyl-ADP-D-ribose + H2O = ADP-D-ribose + acetate + H(+). Deacetylates O-acetyl-ADP ribose to yield ADP-ribose and free acetate. Down-regulates ribonuclease 3 (RNase III) activity. Acts by interacting directly with the region of the ribonuclease that is required for dimerization/activation. The sequence is that of O-acetyl-ADP-ribose deacetylase from Shigella flexneri serotype 5b (strain 8401).